A 252-amino-acid chain; its full sequence is Sulfoacetaldehyde reductase 2 (252 aa).

6–30 (LITGATSGFGRAAARRFADAGWSLI) is a binding site for NADP(+). Ser-139 lines the substrate pocket. Tyr-152 serves as the catalytic Proton acceptor.

It belongs to the short-chain dehydrogenases/reductases (SDR) family. Homodimer and heterotetramer.

It catalyses the reaction 2-hydroxyethane-1-sulfonate + NADP(+) = sulfoacetaldehyde + NADPH + H(+). It functions in the pathway organosulfur degradation. Functionally, catalyzes the formation of isethionate from 2-sulfoacetaldehyde in the deaminative pathway of taurine. Constitutively expressed enzyme that only mediates a small part of the activity observed in taurine-grown cells. In Chromohalobacter salexigens (strain ATCC BAA-138 / DSM 3043 / CIP 106854 / NCIMB 13768 / 1H11), this protein is Sulfoacetaldehyde reductase 2 (isfD2).